The sequence spans 808 residues: Probable potassium transporter 3 (808 aa).

Residues 1-34 lie on the Cytoplasmic side of the membrane; that stretch reads MPVADCESGLSPADVTGAGAANGNPGHWRSYYRH. A helical membrane pass occupies residues 35–55; the sequence is VLLLAYQSCGVVYGDLSTSPL. Over 56–81 the chain is Extracellular; it reads YVYKSTFIIGSLRRFQDEEIVFGVFS. The helical transmembrane segment at 82–102 threads the bilayer; sequence LVFWTLTLIPLLKYVFIVLAA. Topologically, residues 103–167 are cytoplasmic; that stretch reads DDNGEGGTFA…FLENHRKSRT (65 aa). A helical membrane pass occupies residues 168–188; it reads FLLVTVLFGASLVIGDGVLTP. Residues 189–204 lie on the Extracellular side of the membrane; it reads PMSVLSSFSGLQVHST. A helical transmembrane segment spans residues 205–225; the sequence is ALTSGEVEILSCTVLVCLFMV. Topologically, residues 226-232 are cytoplasmic; that stretch reads QHWGTHR. The helical transmembrane segment at 233–253 threads the bilayer; the sequence is VAFLFAPVVIVWLLLLGALGV. Residues 254 to 283 are Extracellular-facing; that stretch reads YNIVVWNPRVLRALSPYYLVRFFQHTGKDG. The chain crosses the membrane as a helical span at residues 284 to 304; sequence WISLGGILLSMTGTEAMYADL. At 305–313 the chain is on the cytoplasmic side; that stretch reads GHFTAASIR. Residues 314–334 traverse the membrane as a helical segment; the sequence is VAFVGLIYPCLVLQYMGQAAF. Residues 335–354 are Extracellular-facing; it reads LSKSPHCDIHFVFFESIPTG. A helical transmembrane segment spans residues 355 to 375; that stretch reads IFWPVLVIATLAAIVGSQAVI. The Cytoplasmic portion of the chain corresponds to 376–406; sequence SATFSIVRQCTALGCFPRVKIVHTSRRIHGQ. The chain crosses the membrane as a helical span at residues 407-427; it reads IYSPEINWILMLLCIAVTMGL. The Extracellular segment spans residues 428–439; the sequence is RDTTLIGNAYGM. Residues 440–460 form a helical membrane-spanning segment; that stretch reads ACAGVMLVTTLLMALVIVFVW. Residues 461–464 are Cytoplasmic-facing; that stretch reads QYSC. A helical membrane pass occupies residues 465-485; that stretch reads LVAALFLVAFGVVEAVYLSAA. Residues 486-491 lie on the Extracellular side of the membrane; sequence LMKVPQ. The helical transmembrane segment at 492 to 512 threads the bilayer; it reads GGWLPLVLSLVFVAVMYVWHY. Over 513–808 the chain is Cytoplasmic; that stretch reads GTRRKHQFDV…LIEVGMIYYV (296 aa).

This sequence belongs to the HAK/KUP transporter (TC 2.A.72.3) family.

It localises to the membrane. Functionally, high-affinity potassium transporter. This is Probable potassium transporter 3 (HAK3) from Oryza sativa subsp. japonica (Rice).